Here is a 509-residue protein sequence, read N- to C-terminus: Dihydrolipoyl dehydrogenase, mitochondrial (509 aa).

Residues 1 to 35 constitute a mitochondrion transit peptide; that stretch reads MQSWSRVYCSLVKRGHFSRISHGLQGVSVVPLRTY. Position 66 is an N6-acetyllysine; alternate (Lys-66). Lys-66 is modified (N6-succinyllysine; alternate). Residues 71–80 and Lys-89 each bind FAD; that span reads EKNETLGGTC. Cys-80 and Cys-85 are oxidised to a cystine. N6-acetyllysine; alternate is present on residues Lys-104, Lys-122, Lys-132, and Lys-143. N6-succinyllysine; alternate is present on residues Lys-104, Lys-122, Lys-132, and Lys-143. Gly-154 lines the FAD pocket. An N6-succinyllysine mark is found at Lys-159 and Lys-166. Residue 183-185 coordinates FAD; it reads TGS. NAD(+) is bound by residues 220-227 and Glu-243; that span reads GAGVIGVE. Lys-273 and Lys-277 each carry N6-succinyllysine. Val-278 provides a ligand contact to NAD(+). Residues Ser-285 and Ser-297 each carry the phosphoserine modification. Gly-314 lines the NAD(+) pocket. Lys-346 carries the N6-acetyllysine modification. FAD contacts are provided by residues Asp-355 and 361-364; that span reads MLAH. Lys-410 carries the post-translational modification N6-acetyllysine; alternate. Position 410 is an N6-succinyllysine; alternate (Lys-410). An N6-acetyllysine mark is found at Lys-417 and Lys-420. Residue Lys-430 is modified to N6-succinyllysine. His-487 functions as the Proton acceptor in the catalytic mechanism. N6-acetyllysine; alternate is present on Lys-505. Lys-505 bears the N6-succinyllysine; alternate mark.

It belongs to the class-I pyridine nucleotide-disulfide oxidoreductase family. As to quaternary structure, homodimer. Part of the multimeric pyruvate dehydrogenase complex that contains multiple copies of pyruvate dehydrogenase (subunits PDHA (PDHA1 or PDHA2) and PDHB, E1), dihydrolipoamide acetyltransferase (DLAT, E2) and lipoamide dehydrogenase (DLD, E3). These subunits are bound to an inner core composed of about 48 DLAT and 12 PDHX molecules (by non covalent bonds). The 2-oxoglutarate dehydrogenase complex is composed of OGDH (2-oxoglutarate dehydrogenase; E1), DLST (dihydrolipoamide succinyltransferase; E2), DLD (dihydrolipoamide dehydrogenase; E3) and the assembly factor KGD4. It contains multiple copies of the three enzymatic components (E1, E2 and E3). In the nucleus, the 2-oxoglutarate dehydrogenase complex associates with KAT2A. Interacts with PDHX. Requires FAD as cofactor. Post-translationally, tyrosine phosphorylated.

It localises to the mitochondrion matrix. It is found in the nucleus. The protein resides in the cell projection. Its subcellular location is the cilium. The protein localises to the flagellum. It localises to the cytoplasmic vesicle. It is found in the secretory vesicle. The protein resides in the acrosome. It carries out the reaction N(6)-[(R)-dihydrolipoyl]-L-lysyl-[protein] + NAD(+) = N(6)-[(R)-lipoyl]-L-lysyl-[protein] + NADH + H(+). Functionally, lipoamide dehydrogenase is a component of the glycine cleavage system as well as an E3 component of three alpha-ketoacid dehydrogenase complexes (pyruvate-, alpha-ketoglutarate-, and branched-chain amino acid-dehydrogenase complex). The 2-oxoglutarate dehydrogenase complex is mainly active in the mitochondrion. A fraction of the 2-oxoglutarate dehydrogenase complex also localizes in the nucleus and is required for lysine succinylation of histones: associates with KAT2A on chromatin and provides succinyl-CoA to histone succinyltransferase KAT2A. In monomeric form may have additional moonlighting function as serine protease. Involved in the hyperactivation of spermatazoa during capacitation and in the spermatazoal acrosome reaction. The chain is Dihydrolipoyl dehydrogenase, mitochondrial (DLD) from Bos taurus (Bovine).